We begin with the raw amino-acid sequence, 620 residues long: 1-deoxy-D-xylulose-5-phosphate synthase (620 aa).

Residues His-80 and 121–123 (GHS) each bind thiamine diphosphate. Asp-152 contributes to the Mg(2+) binding site. Thiamine diphosphate is bound by residues 153–154 (GA), Asn-181, Tyr-288, and Glu-370. Asn-181 contributes to the Mg(2+) binding site.

It belongs to the transketolase family. DXPS subfamily. As to quaternary structure, homodimer. The cofactor is Mg(2+). Thiamine diphosphate serves as cofactor.

It carries out the reaction D-glyceraldehyde 3-phosphate + pyruvate + H(+) = 1-deoxy-D-xylulose 5-phosphate + CO2. It functions in the pathway metabolic intermediate biosynthesis; 1-deoxy-D-xylulose 5-phosphate biosynthesis; 1-deoxy-D-xylulose 5-phosphate from D-glyceraldehyde 3-phosphate and pyruvate: step 1/1. In terms of biological role, catalyzes the acyloin condensation reaction between C atoms 2 and 3 of pyruvate and glyceraldehyde 3-phosphate to yield 1-deoxy-D-xylulose-5-phosphate (DXP). This is 1-deoxy-D-xylulose-5-phosphate synthase from Salmonella arizonae (strain ATCC BAA-731 / CDC346-86 / RSK2980).